The following is a 501-amino-acid chain: MESVERKSESSYLGMRNMQPEQRLSLDPPRLRSTPQDELHDLLCVGFGPASLAIAIALHDALDPRLNKSASNIHAQPKICFLERQKQFAWHSGMLVPGSKMQISFIKDLATLRDPRSSFTFLNYLHQKGRLIHFTNLSTFLPARLEFEDYMRWCAQQFSDVVAYGEEVVEVIPGKSDPSSSVVDFFTVRSRNVETGEISARRTRKVVIAIGGTAKMPSGLPQDPRIIHSSKYCTTLPALLKDKSKPYNIAVLGSGQSAAEIFHDLQKRYPNSRTTLIMRDSAMRPSDDSPFVNEIFNPERVDKFYSQSAAERQRSLLADKATNYSVVRLELIEEIYNDMYLQRVKNPDETQWQHRILPERKITRVEHHGPQSRMRIHLKSSKPESEGAANDVKETLEVDALMVATGYNRNAHERLLSKVQHLRPTGQDQWKPHRDYRVEMDPSKVSSEAGIWLQGCNERTHGLSDSLLSVLAVRGGEMVQSIFGEQLERAAVQGHQLRAML.

The interval 1-31 (MESVERKSESSYLGMRNMQPEQRLSLDPPRL) is disordered. Residues 83–91 (ERQKQFAWH) and glutamine 102 each bind FAD. Lysine 107 is a substrate binding site. Residue valine 168 participates in FAD binding. Residues 254-257 (SGQS) and arginine 279 each bind NADP(+). Residues 293-296 (NEIF) and asparagine 323 contribute to the substrate site. 323-325 (NYS) contributes to the NADP(+) binding site. Residues 366-390 (EHHGPQSRMRIHLKSSKPESEGAAN) form a disordered region. Basic and acidic residues predominate over residues 381-390 (SKPESEGAAN). Residue 466–468 (SLL) coordinates FAD. Serine 469 is a substrate binding site.

It belongs to the lysine N(6)-hydroxylase/L-ornithine N(5)-oxygenase family. As to quaternary structure, homotetramer. FAD serves as cofactor.

It catalyses the reaction L-ornithine + NADPH + O2 = N(5)-hydroxy-L-ornithine + NADP(+) + H2O. The catalysed reaction is L-ornithine + NADH + O2 = N(5)-hydroxy-L-ornithine + NAD(+) + H2O. Its pathway is siderophore biosynthesis; ferrichrome biosynthesis. L-ornithine N(5)-monooxygenase; part of the siderophore biosynthetic pathway. Aspergillus fumigatus produces four types of siderophores, low-molecular-mass iron chelators, including excreted fusarinine C (FsC) and triacetylfusarinine C (TAFC) for iron uptake; and intacellular ferricrocin (FC) for hyphal and hydroxyferricrocin (HFC) for conidial iron distribution and storage. TAFC consists of three N(2)-acetyl-N(5)-anhydromevalonyl-N(5)-hydroxyornithine residues cyclically linked by ester bonds; FC is a cyclic hexapeptide with the structure Gly-Ser-Gly-(N(5)-acetyl-N(5)-hydroxyornithine)x3. The biosynthesis of all four siderophores depends on the hydroxylation of ornithine, catalyzed by the monooxygenase sidA. SidA is highly specific for its substrate, only hydrolyzing l-ornithine, and has preference for NADPH over NADH, NADPH playing a role in stabilization of the C4a-hydroperoxyflavin intermediate. Subsequently, the pathways for biosynthesis of extra- and intracellular siderophores split. For biosynthesis of extracellular siderophores, the transacylase sidF transfers anhydromevalonyl to N(5)-hydroxyornithine. The required anhydromevalonyl-CoA moiety is derived from mevalonate by CoA ligation and dehydration catalyzed by sidI and sidH respectively. The acetylation of N(5)-hydroxyornithine for FC biosynthesis involves the constitutively expressed sidL. FC is hydroxylated to HFC by an as yet uncharacterized enzyme during conidiation. Assembly of fusarinine C (FsC) and FC is catalyzed by two different nonribosomal peptide synthetases (NRPS), sidD and sidC respectively. Subsequently, sidG catalyzes N2-acetylation of FsC for forming TAFC. Both extra- and intracellular siderophores are crucial for growth during iron limitation and virulence. The chain is L-ornithine N(5)-monooxygenase from Aspergillus fumigatus (strain ATCC MYA-4609 / CBS 101355 / FGSC A1100 / Af293) (Neosartorya fumigata).